Here is a 58-residue protein sequence, read N- to C-terminus: Parvalbumin beta 3 (58 aa).

N-acetylalanine is present on Ala-1. The EF-hand domain maps to 24 to 58; that stretch reads FNYKTFFKFFAIIDQDHSGFIEEEELKALSDAETK. 6 residues coordinate Ca(2+): Asp-37, Asp-39, Ser-41, Phe-43, Glu-45, and Glu-48.

This sequence belongs to the parvalbumin family.

In terms of biological role, in muscle, parvalbumin is thought to be involved in relaxation after contraction. It binds two calcium ions. In Merluccius senegalensis (Senegalese hake), this protein is Parvalbumin beta 3.